A 24-amino-acid chain; its full sequence is Superoxide dismutase [Cu-Zn], chloroplastic (24 aa).

The protein belongs to the Cu-Zn superoxide dismutase family. As to quaternary structure, homodimer. Cu cation is required as a cofactor. The cofactor is Zn(2+).

It is found in the plastid. It localises to the chloroplast. It carries out the reaction 2 superoxide + 2 H(+) = H2O2 + O2. In terms of biological role, destroys radicals which are normally produced within the cells and which are toxic to biological systems. In Picea abies (Norway spruce), this protein is Superoxide dismutase [Cu-Zn], chloroplastic.